The chain runs to 827 residues: Xanthomonalisin (827 aa).

An N-terminal signal peptide occupies residues 1–23 (MKIEKTALTVAIALAMSSLSAHA). Positions 24–237 (EDAWVSTHTQ…GPNVGTQAAA (214 aa)) are cleaved as a propeptide — removed in mature form. A Peptidase S53 domain is found at 241-625 (AHHPQDFAAI…GKLNTYAQAN (385 aa)). Active-site charge relay system residues include E312, D316, and S544. Ca(2+) contacts are provided by D585, V586, A601, G603, and D605. Positions 635–722 (TNAPPVANFS…VTVSSSGGTG (88 aa)) constitute a PKD domain. Residues 636 to 827 (NAPPVANFSV…GVSLKATWTN (192 aa)) constitute a propeptide, removed in mature form.

Ca(2+) serves as cofactor. Autocatalytically processed.

The protein localises to the secreted. The enzyme catalyses Cleavage of casein.. With respect to regulation, inhibited by 1,2-epoxy-3-(p-nitrophenoxy)propane (EPNP), but not by pepstatin, pepstatin Ac (S-PI) and diazoacetyl-DL-norleucine methyl ester (DAN). Not inhibited by metal ions. Its function is as follows. Pepstatin-insensitive serine-carboxyl proteinase. Shows activity on acid-denatured hemoglobin and on casein. This chain is Xanthomonalisin, found in Xanthomonas sp. (strain T-22).